The primary structure comprises 446 residues: NADH-quinone oxidoreductase subunit D (446 aa).

Belongs to the complex I 49 kDa subunit family. As to quaternary structure, NDH-1 is composed of 14 different subunits. Subunits NuoB, C, D, E, F, and G constitute the peripheral sector of the complex.

It localises to the cell membrane. The catalysed reaction is a quinone + NADH + 5 H(+)(in) = a quinol + NAD(+) + 4 H(+)(out). Its function is as follows. NDH-1 shuttles electrons from NADH, via FMN and iron-sulfur (Fe-S) centers, to quinones in the respiratory chain. The immediate electron acceptor for the enzyme in this species is believed to be a menaquinone. Couples the redox reaction to proton translocation (for every two electrons transferred, four hydrogen ions are translocated across the cytoplasmic membrane), and thus conserves the redox energy in a proton gradient. This Mycobacterium sp. (strain JLS) protein is NADH-quinone oxidoreductase subunit D.